The following is a 163-amino-acid chain: Lipoprotein signal peptidase (163 aa).

3 consecutive transmembrane segments (helical) span residues 11–31 (ILIAVFVVIFDQVTKYIIATT), 63–83 (KMTFFFIITIIILIALVYFFI), and 88–108 (YNLFMQVAISLLFAGALGNFI). Catalysis depends on residues Asp118 and Asp136. A helical transmembrane segment spans residues 131–151 (IFNIADSSLTIGVILIIIALL).

It belongs to the peptidase A8 family.

It localises to the cell membrane. The enzyme catalyses Release of signal peptides from bacterial membrane prolipoproteins. Hydrolyzes -Xaa-Yaa-Zaa-|-(S,diacylglyceryl)Cys-, in which Xaa is hydrophobic (preferably Leu), and Yaa (Ala or Ser) and Zaa (Gly or Ala) have small, neutral side chains.. It participates in protein modification; lipoprotein biosynthesis (signal peptide cleavage). In terms of biological role, this protein specifically catalyzes the removal of signal peptides from prolipoproteins. This is Lipoprotein signal peptidase from Staphylococcus aureus (strain Mu3 / ATCC 700698).